A 393-amino-acid chain; its full sequence is S-adenosylmethionine synthase (393 aa).

H16 contacts ATP. A Mg(2+)-binding site is contributed by D18. K(+) is bound at residue E44. The L-methionine site is built by E57 and Q100. A flexible loop region spans residues Q100 to G110. ATP is bound by residues D165–K167, R231–F232, D240, R246–K247, and K267. Residue D240 participates in L-methionine binding. Residue K271 participates in L-methionine binding.

It belongs to the AdoMet synthase family. Homotetramer; dimer of dimers. The cofactor is Mg(2+). K(+) is required as a cofactor.

Its subcellular location is the cytoplasm. It catalyses the reaction L-methionine + ATP + H2O = S-adenosyl-L-methionine + phosphate + diphosphate. The protein operates within amino-acid biosynthesis; S-adenosyl-L-methionine biosynthesis; S-adenosyl-L-methionine from L-methionine: step 1/1. Its function is as follows. Catalyzes the formation of S-adenosylmethionine (AdoMet) from methionine and ATP. The overall synthetic reaction is composed of two sequential steps, AdoMet formation and the subsequent tripolyphosphate hydrolysis which occurs prior to release of AdoMet from the enzyme. This Coxiella burnetii (strain Dugway 5J108-111) protein is S-adenosylmethionine synthase.